We begin with the raw amino-acid sequence, 73 residues long: Kappa-scoloptoxin SsmTx-I (73 aa).

Positions 1 to 25 (MMMMFSVVSVFLMLLLLKFHDLSMG) are cleaved as a signal peptide. The propeptide occupies 26–37 (EEISLLKKVVRR). 2 disulfides stabilise this stretch: Cys-45-Cys-56 and Cys-50-Cys-63.

It belongs to the scoloptoxin-04 family. In terms of tissue distribution, expressed by the venom gland.

Its subcellular location is the secreted. In terms of biological role, exhibits highly specific blockage of Kv2.1/KCNB1 (IC(50)=41.7 nM) voltage-gated potassium channels. This blockage is not associated with a significant change in steady-state activation, suggesting that this toxin acts as a channel blocker rather than a gating-modifier. Shows potential analgesic activities in formalin-induced paw licking, thermal pain, and acetic acid-induced abdominal writhing mice models. In Scolopendra mutilans (Chinese red-headed centipede), this protein is Kappa-scoloptoxin SsmTx-I.